Here is a 3135-residue protein sequence, read N- to C-terminus: Beauvericin nonribosomal cyclodepsipeptide synthetase BEA1 (3135 aa).

The segment at 70-458 (HVAYEISNDI…QRLRGSPDKL (389 aa)) is condensation 1. A disordered region spans residues 196–228 (LSNRPYTPESSDPEDDGLSLTPTDGSKTPETEG). An adenylation 1 region spans residues 499 to 896 (SLSPSKVAIC…GRMDSQVKIR (398 aa)). A Carrier 1 domain is found at 1021-1097 (STTTSSQSKL…GLEAIVNGSA (77 aa)). At S1058 the chain carries O-(pantetheine 4'-phosphoryl)serine. Residues 1115 to 1542 (SYSQGRLWFL…NIPISVLPLT (428 aa)) form a condensation 2 region. The segment at 1571–1974 (FRTQVAAYPD…GRMDTQFKIR (404 aa)) is adenylation 2. The segment at 2042–2182 (MYADIGDIDP…FPSPEYLAQV (141 aa)) is S-adenosyl-L-methionine-dependent N-methyltransferase. Carrier domains lie at 2509–2583 (VPIS…REGL) and 2603–2677 (APRT…ESTD). 2 positions are modified to O-(pantetheine 4'-phosphoryl)serine: S2543 and S2637. Residues 2721–3127 (QDMYQSTQMQ…QYFLEEVCNT (407 aa)) are condensation 3.

The protein belongs to the NRP synthetase family.

It catalyses the reaction 3 (R)-2-hydroxy-3-methylbutanoate + 3 L-phenylalanine + 3 S-adenosyl-L-methionine + 6 ATP = beauvericin + 6 AMP + 3 S-adenosyl-L-homocysteine + 6 diphosphate + 6 H(+). Its function is as follows. Beauvericin nonribosomal cyclodepsipeptide synthetase; part of the gene cluster that mediates the biosynthesis of beauvericin (BEA), a non-ribosomal cyclic hexadepsipeptide that shows antibiotic, antifungal, insecticidal, and cancer cell antiproliferative and antihaptotactic activity. Ketoisovalerate reductase BEA2 catalyzes the NADPH-specific reduction of ketoisovaleric acid to hydroxyisovalerate, a precursor for beauvericin biosynthesis. The nonribosomal cyclodepsipeptide synthetase BEA1 then catalyzes the formation of beauvericin via condensation and cyclization of 3 dipeptidol monomers, each composed of one unit of hydroxyisovalerate and one unit of N-methyl-phenylalanine. The protein is Beauvericin nonribosomal cyclodepsipeptide synthetase BEA1 of Gibberella fujikuroi (strain CBS 195.34 / IMI 58289 / NRRL A-6831) (Bakanae and foot rot disease fungus).